The sequence spans 472 residues: Flotillin-like protein 6 (472 aa).

A lipid anchor (S-palmitoyl cysteine) is attached at Cys37. Residues 237-327 adopt a coiled-coil conformation; that stretch reads ENQREAEVAQ…ELYKKQKEAE (91 aa).

This sequence belongs to the band 7/mec-2 family. Flotillin subfamily. Post-translationally, may be palmitoylated. As to expression, very low occasional expression in roots and nodules.

It is found in the cell membrane. Its subcellular location is the membrane. The protein localises to the caveola. In terms of biological role, may act as a scaffolding protein within caveolar membranes, functionally participating in formation of caveolae or caveolae-like vesicles. May be involved in nodule formation. This chain is Flotillin-like protein 6 (FLOT6), found in Medicago truncatula (Barrel medic).